The primary structure comprises 1794 residues: Protein TIC 214 (1794 aa).

6 helical membrane-spanning segments follow: residues 23–43, 64–84, 87–107, 124–144, 172–192, and 218–238; these read VVVG…SYLF, FIMG…HLAL, PHTI…WNNH, LSIQ…HFIL, VGWL…LFWI, and ILSI…PSPI. Residues 244 to 307 are disordered; the sequence is KETSETGETE…REGVNGKEKT (64 aa). Residues 248–258 show a composition bias toward acidic residues; that stretch reads ETGETEEETDV. Composition is skewed to basic and acidic residues over residues 259-276 and 286-307; these read EIER…KEGS and SEEK…KEKT.

It belongs to the TIC214 family. In terms of assembly, part of the Tic complex.

The protein resides in the plastid. Its subcellular location is the chloroplast inner membrane. Its function is as follows. Involved in protein precursor import into chloroplasts. May be part of an intermediate translocation complex acting as a protein-conducting channel at the inner envelope. This is Protein TIC 214 from Amborella trichopoda.